Here is a 217-residue protein sequence, read N- to C-terminus: MTDLDFIDVADLRREYMKGGLRRHELTEQPLVLFEKWLKQACEARLSDPTAMCVATVDENGQPYQRIVLLKHFDEKGLVFYTNLGSRKASHLEHNQRVSLLFPWYPLERQVCFLGKAEKLSAFEVVKYFHSRPKDSQIAAWASKQSSRISARGVLESKFLELKQKFQHGEVPLPSFWGGYRVTFDSVEFWQGRENRLHDRFIYQKSPEGWSIERLAP.

Substrate is bound by residues 13 to 16 (RREY) and K71. Residues 66 to 71 (RIVLLK), 81 to 82 (YT), R87, K88, and Q110 contribute to the FMN site. The substrate site is built by Y128, R132, and S136. Residues 145–146 (QS) and W190 contribute to the FMN site. Position 196-198 (196-198 (RLH)) interacts with substrate. Residue R200 coordinates FMN.

The protein belongs to the pyridoxamine 5'-phosphate oxidase family. Homodimer. Requires FMN as cofactor.

The catalysed reaction is pyridoxamine 5'-phosphate + O2 + H2O = pyridoxal 5'-phosphate + H2O2 + NH4(+). It carries out the reaction pyridoxine 5'-phosphate + O2 = pyridoxal 5'-phosphate + H2O2. Its pathway is cofactor metabolism; pyridoxal 5'-phosphate salvage; pyridoxal 5'-phosphate from pyridoxamine 5'-phosphate: step 1/1. The protein operates within cofactor metabolism; pyridoxal 5'-phosphate salvage; pyridoxal 5'-phosphate from pyridoxine 5'-phosphate: step 1/1. Functionally, catalyzes the oxidation of either pyridoxine 5'-phosphate (PNP) or pyridoxamine 5'-phosphate (PMP) into pyridoxal 5'-phosphate (PLP). The protein is Pyridoxine/pyridoxamine 5'-phosphate oxidase of Proteus mirabilis (strain HI4320).